Consider the following 314-residue polypeptide: Methionyl-tRNA formyltransferase (314 aa).

110–113 (SLLP) provides a ligand contact to (6S)-5,6,7,8-tetrahydrofolate.

The protein belongs to the Fmt family.

It catalyses the reaction L-methionyl-tRNA(fMet) + (6R)-10-formyltetrahydrofolate = N-formyl-L-methionyl-tRNA(fMet) + (6S)-5,6,7,8-tetrahydrofolate + H(+). Its function is as follows. Attaches a formyl group to the free amino group of methionyl-tRNA(fMet). The formyl group appears to play a dual role in the initiator identity of N-formylmethionyl-tRNA by promoting its recognition by IF2 and preventing the misappropriation of this tRNA by the elongation apparatus. This is Methionyl-tRNA formyltransferase from Bacillus thuringiensis subsp. konkukian (strain 97-27).